We begin with the raw amino-acid sequence, 246 residues long: Bis(5'-nucleosyl)-tetraphosphatase PrpE [asymmetrical] (246 aa).

The protein belongs to the PrpE family. The cofactor is Ni(2+).

It catalyses the reaction P(1),P(4)-bis(5'-guanosyl) tetraphosphate + H2O = GMP + GTP + 2 H(+). In terms of biological role, asymmetrically hydrolyzes Ap4p to yield AMP and ATP. The chain is Bis(5'-nucleosyl)-tetraphosphatase PrpE [asymmetrical] from Bacillus cereus (strain 03BB102).